The following is a 381-amino-acid chain: Cytochrome b (381 aa).

Transmembrane regions (helical) follow at residues 33 to 53 (FGSLLGICLVIQILTGLFLAM), 77 to 98 (WLIRNLHANGASMFFMCLFLHV), 113 to 133 (WNIGVMLLLTVTATAFVGYVL), and 178 to 198 (FFALHFLLPFVIAGLTLVHLT). His-83 and His-97 together coordinate heme b. Residues His-182 and His-196 each coordinate heme b. An a ubiquinone-binding site is contributed by His-201. Helical transmembrane passes span 226–246 (IKDILGLMFLLLVLLSLALFS), 288–308 (LGGVLALLASILILLVIPFLH), 320–340 (ISQTLFWILTANLITLTWIGG), and 347–367 (FIIIGQPASILYFPLIHHPMP).

This sequence belongs to the cytochrome b family. In terms of assembly, the cytochrome bc1 complex contains 11 subunits: 3 respiratory subunits (MT-CYB, CYC1 and UQCRFS1), 2 core proteins (UQCRC1 and UQCRC2) and 6 low-molecular weight proteins (UQCRH/QCR6, UQCRB/QCR7, UQCRQ/QCR8, UQCR10/QCR9, UQCR11/QCR10 and a cleavage product of UQCRFS1). This cytochrome bc1 complex then forms a dimer. The cofactor is heme b.

The protein localises to the mitochondrion inner membrane. Functionally, component of the ubiquinol-cytochrome c reductase complex (complex III or cytochrome b-c1 complex) that is part of the mitochondrial respiratory chain. The b-c1 complex mediates electron transfer from ubiquinol to cytochrome c. Contributes to the generation of a proton gradient across the mitochondrial membrane that is then used for ATP synthesis. The protein is Cytochrome b (MT-CYB) of Sminthopsis youngsoni (Lesser hairy-footed dunnart).